A 335-amino-acid polypeptide reads, in one-letter code: Phosphate acyltransferase (335 aa).

This sequence belongs to the PlsX family. Homodimer. Probably interacts with PlsY.

Its subcellular location is the cytoplasm. The enzyme catalyses a fatty acyl-[ACP] + phosphate = an acyl phosphate + holo-[ACP]. The protein operates within lipid metabolism; phospholipid metabolism. Its function is as follows. Catalyzes the reversible formation of acyl-phosphate (acyl-PO(4)) from acyl-[acyl-carrier-protein] (acyl-ACP). This enzyme utilizes acyl-ACP as fatty acyl donor, but not acyl-CoA. This is Phosphate acyltransferase from Desulforudis audaxviator (strain MP104C).